A 351-amino-acid polypeptide reads, in one-letter code: Selenide, water dikinase (351 aa).

Cys-20 is a catalytic residue. Residues Lys-23 and 51-53 (TKD) each bind ATP. Mg(2+) is bound at residue Asp-54. ATP contacts are provided by residues Asp-71, Asp-94, and 142 to 144 (GHS). Asp-94 contributes to the Mg(2+) binding site. Asp-230 serves as a coordination point for Mg(2+).

The protein belongs to the selenophosphate synthase 1 family. Class I subfamily. In terms of assembly, homodimer. The cofactor is Mg(2+).

The enzyme catalyses hydrogenselenide + ATP + H2O = selenophosphate + AMP + phosphate + 2 H(+). Functionally, synthesizes selenophosphate from selenide and ATP. This chain is Selenide, water dikinase, found in Pasteurella multocida (strain Pm70).